The following is a 57-amino-acid chain: Putative secreted protein ML2569.1 (57 aa).

The first 32 residues, 1-32 (MSRIVAPAAASVVVGLLLGAATIFGMTLMVQQ), serve as a signal peptide directing secretion. The segment at 34–57 (TKPPLPGGDPQSSVLNRVEYGNRT) is disordered.

The chain is Putative secreted protein ML2569.1 from Mycobacterium leprae (strain TN).